A 431-amino-acid polypeptide reads, in one-letter code: Tol-Pal system protein TolB (431 aa).

A signal peptide spans 1–26; the sequence is MSLMTKLGFRALVASCLITAGSAANA. The interval 406–431 is disordered; it reads DGSAPPQILSVQGGSVREPSWGPFMQ.

The protein belongs to the TolB family. In terms of assembly, the Tol-Pal system is composed of five core proteins: the inner membrane proteins TolA, TolQ and TolR, the periplasmic protein TolB and the outer membrane protein Pal. They form a network linking the inner and outer membranes and the peptidoglycan layer.

It is found in the periplasm. Functionally, part of the Tol-Pal system, which plays a role in outer membrane invagination during cell division and is important for maintaining outer membrane integrity. This is Tol-Pal system protein TolB from Burkholderia orbicola (strain MC0-3).